The sequence spans 245 residues: MEEPLTVAAIFRDPFNILAISEVLKVVAAVGWSVNYIGMVHRAWKDQIPSIGILPLCCDIGWEFVYAWMFPDFSSHWQGVVRVWFFLHSAVLLVTLKVSPNDWVHTPLGHRHIVFIYIFVTLVFGAGQYALAAEIGPALGFHWGGALCQFLSSSCGIAQLLSRGHTRGASYLIWFARAISTFAGFIKLCIRFQHNVDGAPWLDSPMCWFYIVTVLSFDAAYPFLYSSMRKLETPALRKESRIKNQ.

7 helical membrane passes run 17–37, 51–71, 76–96, 113–133, 138–158, 170–190, and 205–225; these read ILAISEVLKVVAAVGWSVNYI, IGILPLCCDIGWEFVYAWMFP, HWQGVVRVWFFLHSAVLLVTL, IVFIYIFVTLVFGAGQYALAA, ALGFHWGGALCQFLSSSCGIA, SYLIWFARAISTFAGFIKLCI, and PMCWFYIVTVLSFDAAYPFLY.

It belongs to the paxB family.

The protein localises to the membrane. Its pathway is secondary metabolite biosynthesis; terpenoid biosynthesis. Its function is as follows. Terpene cyclase; part of the gene cluster that mediates the biosynthesis of paraherquonin, a meroterpenoid with a unique, highly congested hexacyclic molecular architecture. The first step of the pathway is the synthesis of 3,5-dimethylorsellinic acid (DMOA) by the polyketide synthase prhL. Synthesis of DMOA is followed by farnesylation by the prenyltransferase prhE, methylesterification by the methyl-transferase prhM, epoxidation of the prenyl chain by the flavin-dependent monooxygenase prhF, and cyclization of the farnesyl moiety by the terpene cyclase prhH, to yield the tetracyclic intermediate, protoaustinoid A. The short chain dehydrogenase prhI then oxidizes the C-3 alcohol group of the terpene cyclase product to transform protoaustinoid A into protoaustinoid B. The FAD-binding monooxygenase prhJ catalyzes the oxidation of protoaustinoid B into preaustinoid A which is further oxidized into preaustinoid A1 by FAD-binding monooxygenase phrK. Finally, prhA leads to berkeleydione via the berkeleyone B intermediate. PrhA is a multifunctional dioxygenase that first desaturates at C5-C6 to form berkeleyone B, followed by rearrangement of the A/B-ring to form the cycloheptadiene moiety in berkeleydione. Berkeleydione serves as the key intermediate for the biosynthesis of paraherquonin as well as many other meroterpenoids. The cytochrome P450 monooxygenases prhB, prhD, and prhN, as well as the isomerase prhC, are probably involved in the late stage of paraherquonin biosynthesis, after the production of berkeleydione. Especially prhC might be a multifunctional enzyme that catalyzes the D-ring expansion via intramolecular methoxy rearrangement, as well as the hydrolysis of the expanded D-ring. The polypeptide is Terpene cyclase prhH (Penicillium brasilianum).